The following is a 669-amino-acid chain: Dymeclin (669 aa).

Residue glycine 2 is the site of N-myristoyl glycine attachment.

This sequence belongs to the dymeclin family. As to quaternary structure, interacts with GOLM1 and PPIB. In terms of processing, myristoylated in vitro; myristoylation is not essential for protein targeting to Golgi compartment.

It localises to the cytoplasm. Its subcellular location is the golgi apparatus. It is found in the membrane. Functionally, necessary for correct organization of Golgi apparatus. Involved in bone development. This chain is Dymeclin (Dym), found in Mus musculus (Mouse).